The chain runs to 415 residues: Ribulose bisphosphate carboxylase/oxygenase activase (415 aa).

Residue 37-44 (GRKGEGKT) coordinates ATP.

This sequence belongs to the RuBisCO activase family.

In terms of biological role, activation of RuBisCO (ribulose-1,5-bisohosphate carboxylase/oxygenase; EC 4.1.1.39) involves the ATP-dependent carboxylation of the epsilon-amino group of lysine leading to a carbamate structure. The sequence is that of Ribulose bisphosphate carboxylase/oxygenase activase (rca) from Anabaena sp. (strain CA / ATCC 33047).